The following is a 618-amino-acid chain: Proline--tRNA ligase (618 aa).

This sequence belongs to the class-II aminoacyl-tRNA synthetase family. ProS type 1 subfamily. In terms of assembly, homodimer.

The protein resides in the cytoplasm. It catalyses the reaction tRNA(Pro) + L-proline + ATP = L-prolyl-tRNA(Pro) + AMP + diphosphate. Its function is as follows. Catalyzes the attachment of proline to tRNA(Pro) in a two-step reaction: proline is first activated by ATP to form Pro-AMP and then transferred to the acceptor end of tRNA(Pro). As ProRS can inadvertently accommodate and process non-cognate amino acids such as alanine and cysteine, to avoid such errors it has two additional distinct editing activities against alanine. One activity is designated as 'pretransfer' editing and involves the tRNA(Pro)-independent hydrolysis of activated Ala-AMP. The other activity is designated 'posttransfer' editing and involves deacylation of mischarged Ala-tRNA(Pro). The misacylated Cys-tRNA(Pro) is not edited by ProRS. This chain is Proline--tRNA ligase, found in Streptococcus pyogenes serotype M5 (strain Manfredo).